The following is a 303-amino-acid chain: Methionyl-tRNA formyltransferase (303 aa).

110–113 (SLLP) provides a ligand contact to (6S)-5,6,7,8-tetrahydrofolate.

It belongs to the Fmt family.

It carries out the reaction L-methionyl-tRNA(fMet) + (6R)-10-formyltetrahydrofolate = N-formyl-L-methionyl-tRNA(fMet) + (6S)-5,6,7,8-tetrahydrofolate + H(+). Its function is as follows. Attaches a formyl group to the free amino group of methionyl-tRNA(fMet). The formyl group appears to play a dual role in the initiator identity of N-formylmethionyl-tRNA by promoting its recognition by IF2 and preventing the misappropriation of this tRNA by the elongation apparatus. The chain is Methionyl-tRNA formyltransferase from Campylobacter lari (strain RM2100 / D67 / ATCC BAA-1060).